The following is a 183-amino-acid chain: Tumor necrosis factor ligand superfamily member 4 (183 aa).

The Cytoplasmic portion of the chain corresponds to 1–23; the sequence is MERVQPLEENVGNAARPRFERNK. The helical; Signal-anchor for type II membrane protein transmembrane segment at 24–50 threads the bilayer; sequence LLLVASVIQGLGLLLCFTYICLHFSAL. In terms of domain architecture, THD spans 51–173; the sequence is QVSHRYPRIQ…HVNGGELILI (123 aa). Residues 51 to 183 lie on the Extracellular side of the membrane; it reads QVSHRYPRIQ…HQNPGEFCVL (133 aa). 4 N-linked (GlcNAc...) asparagine glycosylation sites follow: N90, N114, N152, and N157. C97 and C181 are joined by a disulfide.

It belongs to the tumor necrosis factor family. In terms of assembly, homotrimer.

The protein localises to the membrane. Cytokine that binds to TNFRSF4. Co-stimulates T-cell proliferation and cytokine production. This is Tumor necrosis factor ligand superfamily member 4 (TNFSF4) from Homo sapiens (Human).